Here is a 200-residue protein sequence, read N- to C-terminus: Ras-related protein RABF2b (200 aa).

17-25 (GDVGAGKSS) serves as a coordination point for GTP. Residues 39–47 (QESTIGAAF) carry the Effector region motif. Residues 65–69 (DTAGQ), 123–126 (NKSD), and 153–154 (SA) contribute to the GTP site. 2 S-geranylgeranyl cysteine lipidation sites follow: Cys-198 and Cys-199.

Belongs to the small GTPase superfamily. Rab family. Interacts with VPS9A homodimer. Interacts with TCTP1. Interacts with MON1. Interacts with EREX (via PX domain). Binds to VPS3. Expressed in roots and actively dividing cells.

The protein localises to the early endosome membrane. It is found in the endosome membrane. Its subcellular location is the prevacuolar compartment membrane. The protein resides in the endosome. It localises to the multivesicular body membrane. The protein localises to the cell membrane. It is found in the cytoplasm. Regulated by guanine nucleotide exchange factors (GEFs) which promote the exchange of bound GDP for free GTP. Functionally, endosomal protein that may be involved in endocytosis. Involved in the trafficking of proteins from prevacuolar compartments (PVCs) to vacuoles. May activate the MON1-CCZ1 complex which acts as guanine nucleotide exchange factors (GEF) for Rab7 protein family, and serves as a link between Rab5 and Rab7 families in PVCs, and mediates PVC maturation. Involved in vacuolar transport of storage proteins with EREX as effector. Regulates membrane trafficking to protein storage vacuoles (PSVs). In Arabidopsis thaliana (Mouse-ear cress), this protein is Ras-related protein RABF2b.